Consider the following 259-residue polypeptide: 14-3-3-like protein (259 aa).

The disordered stretch occupies residues 237–259 (DTTDDAEDEIREGSKQESGDGQQ). The segment covering 247 to 259 (REGSKQESGDGQQ) has biased composition (basic and acidic residues).

It belongs to the 14-3-3 family. In terms of tissue distribution, leaves specific.

This chain is 14-3-3-like protein, found in Solanum tuberosum (Potato).